Here is a 484-residue protein sequence, read N- to C-terminus: Siroheme synthase 1 (484 aa).

Residues 1 to 205 are precorrin-2 dehydrogenase /sirohydrochlorin ferrochelatase; it reads MHHYPIFLKL…GREAEGEAEL (205 aa). NAD(+) is bound by residues 22-23 and 43-44; these read EA and PV. Ser130 carries the post-translational modification Phosphoserine. Residues 220–484 are uroporphyrinogen-III C-methyltransferase; it reads GEVFLVGAGP…DPCWTGGMRD (265 aa). Residue Pro229 coordinates S-adenosyl-L-methionine. Asp252 functions as the Proton acceptor in the catalytic mechanism. Lys274 serves as the catalytic Proton donor. S-adenosyl-L-methionine-binding positions include 305–307, Leu310, 335–336, Met387, and Ala416; these read GGD and SA.

It in the N-terminal section; belongs to the precorrin-2 dehydrogenase / sirohydrochlorin ferrochelatase family. In the C-terminal section; belongs to the precorrin methyltransferase family.

The enzyme catalyses uroporphyrinogen III + 2 S-adenosyl-L-methionine = precorrin-2 + 2 S-adenosyl-L-homocysteine + H(+). It carries out the reaction precorrin-2 + NAD(+) = sirohydrochlorin + NADH + 2 H(+). The catalysed reaction is siroheme + 2 H(+) = sirohydrochlorin + Fe(2+). It participates in cofactor biosynthesis; adenosylcobalamin biosynthesis; precorrin-2 from uroporphyrinogen III: step 1/1. Its pathway is cofactor biosynthesis; adenosylcobalamin biosynthesis; sirohydrochlorin from precorrin-2: step 1/1. It functions in the pathway porphyrin-containing compound metabolism; siroheme biosynthesis; precorrin-2 from uroporphyrinogen III: step 1/1. The protein operates within porphyrin-containing compound metabolism; siroheme biosynthesis; siroheme from sirohydrochlorin: step 1/1. It participates in porphyrin-containing compound metabolism; siroheme biosynthesis; sirohydrochlorin from precorrin-2: step 1/1. Functionally, multifunctional enzyme that catalyzes the SAM-dependent methylations of uroporphyrinogen III at position C-2 and C-7 to form precorrin-2 via precorrin-1. Then it catalyzes the NAD-dependent ring dehydrogenation of precorrin-2 to yield sirohydrochlorin. Finally, it catalyzes the ferrochelation of sirohydrochlorin to yield siroheme. This chain is Siroheme synthase 1, found in Halorhodospira halophila (strain DSM 244 / SL1) (Ectothiorhodospira halophila (strain DSM 244 / SL1)).